The primary structure comprises 104 residues: Cytochrome c-551 (104 aa).

The first 22 residues, 1–22 (MKPYALLSLLATGTLLAQGAWA), serve as a signal peptide directing secretion. Residues Cys-34, Cys-37, His-38, and Met-83 each contribute to the heme c site.

In terms of processing, binds 1 heme c group covalently per subunit.

Its subcellular location is the periplasm. Functionally, electron donor for cytochrome cd1 in nitrite and nitrate respiration. This chain is Cytochrome c-551 (nirM), found in Pseudomonas aeruginosa (strain ATCC 15692 / DSM 22644 / CIP 104116 / JCM 14847 / LMG 12228 / 1C / PRS 101 / PAO1).